We begin with the raw amino-acid sequence, 490 residues long: MKNYFNSLNFRQKLINLQKCKLIDNQFLSEKNNVLKGKNIVIVGCGSQGLNQGLNMRDSGLNISYALRDDSIFNKNQSWINATSNGFFVGTYENIIPTADLVINLTPDKQHEQVVNVLQKFMKPNSVLGFSHGFNIVEVGQLIRNDITVIMVAPKCPGTEVREEYKRGFGVPALIAVHSENDPHDIGFEIAKSWAISIGSHHAGILHSSFIAEVKSDLMGEQTILCGMLQASSLVCYNQLIFQGVNPSYAGKLIQTGWEVITESVKHGGITLMLDRLSNTAKIRAYFLSKKLKKIFFPLFRKHMDDIISGEFSKNMMFDWKNNDQQLKEWRTEIQNTDFEKCNIYYKQIPEQEYFDNGLLMVAILKAGIELSFEIMIETGIKEESAYYESLHELPLIANTIARKRLYEMNLVISDTAEYGSYLFSHAAIPLLKKFMNELQPGDLGNKISTSELDNITLYKVNAKIESHPIEIIGKKLRLYMTSMVPIKTK.

The region spanning 15 to 208 (INLQKCKLID…GSHHAGILHS (194 aa)) is the KARI N-terminal Rossmann domain. NADP(+) contacts are provided by residues 45-48 (CGSQ), R68, S78, and 108-110 (DKQ). H132 is a catalytic residue. An NADP(+)-binding site is contributed by G158. 2 consecutive KARI C-terminal knotted domains span residues 209–344 (SFIA…KCNI) and 345–484 (YYKQ…MTSM). Mg(2+)-binding residues include D217, E221, E389, and E393. S414 is a binding site for substrate.

Belongs to the ketol-acid reductoisomerase family. Mg(2+) is required as a cofactor.

The enzyme catalyses (2R)-2,3-dihydroxy-3-methylbutanoate + NADP(+) = (2S)-2-acetolactate + NADPH + H(+). It catalyses the reaction (2R,3R)-2,3-dihydroxy-3-methylpentanoate + NADP(+) = (S)-2-ethyl-2-hydroxy-3-oxobutanoate + NADPH + H(+). It functions in the pathway amino-acid biosynthesis; L-isoleucine biosynthesis; L-isoleucine from 2-oxobutanoate: step 2/4. It participates in amino-acid biosynthesis; L-valine biosynthesis; L-valine from pyruvate: step 2/4. Involved in the biosynthesis of branched-chain amino acids (BCAA). Catalyzes an alkyl-migration followed by a ketol-acid reduction of (S)-2-acetolactate (S2AL) to yield (R)-2,3-dihydroxy-isovalerate. In the isomerase reaction, S2AL is rearranged via a Mg-dependent methyl migration to produce 3-hydroxy-3-methyl-2-ketobutyrate (HMKB). In the reductase reaction, this 2-ketoacid undergoes a metal-dependent reduction by NADPH to yield (R)-2,3-dihydroxy-isovalerate. The chain is Ketol-acid reductoisomerase (NADP(+)) from Buchnera aphidicola subsp. Melaphis rhois.